The primary structure comprises 757 residues: Lysyl oxidase homolog 4 (757 aa).

An N-terminal signal peptide occupies residues 1-25 (MWFLPAALPLLPLLLLLGQAPPSRP). 4 consecutive SRCR domains span residues 33-134 (LRLV…VVCN), 160-288 (VRLK…VSCV), 312-412 (VRLR…VRCN), and 422-530 (VRLA…VSCT). Cystine bridges form between cysteine 59–cysteine 123, cysteine 72–cysteine 133, cysteine 103–cysteine 113, cysteine 192–cysteine 277, cysteine 205–cysteine 287, cysteine 252–cysteine 262, cysteine 337–cysteine 401, cysteine 350–cysteine 411, cysteine 381–cysteine 391, cysteine 451–cysteine 516, cysteine 464–cysteine 529, cysteine 498–cysteine 508, cysteine 559–cysteine 565, cysteine 611–cysteine 659, cysteine 643–cysteine 649, cysteine 671–cysteine 681, and cysteine 718–cysteine 732. Asparagine 199 carries N-linked (GlcNAc...) asparagine glycosylation. Positions 534-737 (PDLVMNAQLV…WLHNCHTGDS (204 aa)) are lysyl-oxidase like. Residues histidine 612, histidine 614, and histidine 616 each contribute to the Cu cation site. An N-linked (GlcNAc...) asparagine glycan is attached at asparagine 630. A cross-link (lysine tyrosylquinone (Lys-Tyr)) is located at residues 639 to 675 (KASFCLEDTNCPTGMQRRYACANFGEQGVTVGCWDTY). Tyrosine 675 carries the post-translational modification 2',4',5'-topaquinone.

This sequence belongs to the lysyl oxidase family. Cu cation serves as cofactor. The cofactor is lysine tyrosylquinone residue. Post-translationally, the lysine tyrosylquinone cross-link (LTQ) is generated by condensation of the epsilon-amino group of a lysine with a topaquinone produced by oxidation of tyrosine. In terms of processing, may be proteolytically cleaved by BMP1.

It is found in the secreted. Its subcellular location is the extracellular space. It carries out the reaction L-lysyl-[protein] + O2 + H2O = (S)-2-amino-6-oxohexanoyl-[protein] + H2O2 + NH4(+). Its function is as follows. Catalyzes the oxidative deamination of lysine and hydroxylysine residues in collagen and elastin, resulting in the formation of covalent cross-linkages, and the stabilization of collagen and elastin fibers. In Bos taurus (Bovine), this protein is Lysyl oxidase homolog 4 (LOXL4).